Consider the following 151-residue polypeptide: Globin-2 B chain (151 aa).

Ser-1 is modified (N-acetylserine). A Globin domain is found at 11 to 151 (VSNADQKDLL…SLVAVVQASL (141 aa)). Residue His-103 participates in heme b binding.

The protein belongs to the globin family. In terms of assembly, heterotetramer of two alpha chains and two beta chains.

The polypeptide is Globin-2 B chain (Anadara inaequivalvis (Inequivalve ark)).